Reading from the N-terminus, the 351-residue chain is Holliday junction branch migration complex subunit RuvB (351 aa).

Residues 1-22 (MSDPKANRMVSPERRSDDVGDT) are disordered. Residues 2–185 (SDPKANRMVS…FGIPVRLNFY (184 aa)) form a large ATPase domain (RuvB-L) region. ATP contacts are provided by residues Leu-24, Arg-25, Gly-66, Lys-69, Thr-70, Thr-71, 132–134 (EDF), Arg-175, Tyr-185, and Arg-222. Mg(2+) is bound at residue Thr-70. Residues 186–256 (TIEELESIVS…IADHALSALE (71 aa)) are small ATPAse domain (RuvB-S). The interval 259–351 (AAGLDAMDRR…GLFGTDESDD (93 aa)) is head domain (RuvB-H). DNA contacts are provided by Arg-295, Arg-314, and Arg-319.

This sequence belongs to the RuvB family. As to quaternary structure, homohexamer. Forms an RuvA(8)-RuvB(12)-Holliday junction (HJ) complex. HJ DNA is sandwiched between 2 RuvA tetramers; dsDNA enters through RuvA and exits via RuvB. An RuvB hexamer assembles on each DNA strand where it exits the tetramer. Each RuvB hexamer is contacted by two RuvA subunits (via domain III) on 2 adjacent RuvB subunits; this complex drives branch migration. In the full resolvosome a probable DNA-RuvA(4)-RuvB(12)-RuvC(2) complex forms which resolves the HJ.

It localises to the cytoplasm. The catalysed reaction is ATP + H2O = ADP + phosphate + H(+). The RuvA-RuvB-RuvC complex processes Holliday junction (HJ) DNA during genetic recombination and DNA repair, while the RuvA-RuvB complex plays an important role in the rescue of blocked DNA replication forks via replication fork reversal (RFR). RuvA specifically binds to HJ cruciform DNA, conferring on it an open structure. The RuvB hexamer acts as an ATP-dependent pump, pulling dsDNA into and through the RuvAB complex. RuvB forms 2 homohexamers on either side of HJ DNA bound by 1 or 2 RuvA tetramers; 4 subunits per hexamer contact DNA at a time. Coordinated motions by a converter formed by DNA-disengaged RuvB subunits stimulates ATP hydrolysis and nucleotide exchange. Immobilization of the converter enables RuvB to convert the ATP-contained energy into a lever motion, pulling 2 nucleotides of DNA out of the RuvA tetramer per ATP hydrolyzed, thus driving DNA branch migration. The RuvB motors rotate together with the DNA substrate, which together with the progressing nucleotide cycle form the mechanistic basis for DNA recombination by continuous HJ branch migration. Branch migration allows RuvC to scan DNA until it finds its consensus sequence, where it cleaves and resolves cruciform DNA. This chain is Holliday junction branch migration complex subunit RuvB, found in Bradyrhizobium diazoefficiens (strain JCM 10833 / BCRC 13528 / IAM 13628 / NBRC 14792 / USDA 110).